The sequence spans 123 residues: Diacylglycerol kinase (123 aa).

A helical membrane pass occupies residues 15-32; it reads ILNATGYSLAGFLAAFRG. Glu33 contacts a divalent metal cation. Transmembrane regions (helical) follow at residues 35 to 55, 61 to 81, and 102 to 122; these read AFRQ…LLDV, ALMI…SAIE, and GSAA…TILL. The Proton acceptor role is filled by Glu74. Glu81 serves as a coordination point for a divalent metal cation.

The protein belongs to the bacterial diacylglycerol kinase family. The cofactor is Mg(2+).

The protein localises to the cell inner membrane. It carries out the reaction a 1,2-diacyl-sn-glycerol + ATP = a 1,2-diacyl-sn-glycero-3-phosphate + ADP + H(+). Catalyzes the ATP-dependent phosphorylation of sn-l,2-diacylglycerol (DAG) to phosphatidic acid. Involved in the recycling of diacylglycerol produced as a by-product during membrane-derived oligosaccharide (MDO) biosynthesis. The chain is Diacylglycerol kinase (dgkA) from Pseudomonas aeruginosa (strain ATCC 15692 / DSM 22644 / CIP 104116 / JCM 14847 / LMG 12228 / 1C / PRS 101 / PAO1).